The sequence spans 357 residues: 4-hydroxy-3-methylbut-2-en-1-yl diphosphate synthase (flavodoxin) (357 aa).

Residues Cys265, Cys268, Cys300, and Glu307 each contribute to the [4Fe-4S] cluster site.

It belongs to the IspG family. Homodimer. Requires [4Fe-4S] cluster as cofactor.

The catalysed reaction is (2E)-4-hydroxy-3-methylbut-2-enyl diphosphate + oxidized [flavodoxin] + H2O + 2 H(+) = 2-C-methyl-D-erythritol 2,4-cyclic diphosphate + reduced [flavodoxin]. It participates in isoprenoid biosynthesis; isopentenyl diphosphate biosynthesis via DXP pathway; isopentenyl diphosphate from 1-deoxy-D-xylulose 5-phosphate: step 5/6. Its function is as follows. Converts 2C-methyl-D-erythritol 2,4-cyclodiphosphate (ME-2,4cPP) into 1-hydroxy-2-methyl-2-(E)-butenyl 4-diphosphate. The chain is 4-hydroxy-3-methylbut-2-en-1-yl diphosphate synthase (flavodoxin) from Aquifex aeolicus (strain VF5).